A 207-amino-acid polypeptide reads, in one-letter code: Large ribosomal subunit protein uL3 (207 aa).

The segment at 113–148 is disordered; it reads KGKGFQGPIKRHGQSRGPMAHGSRYHRRPGSMGPVA.

Belongs to the universal ribosomal protein uL3 family. As to quaternary structure, part of the 50S ribosomal subunit. Forms a cluster with proteins L14 and L19.

Functionally, one of the primary rRNA binding proteins, it binds directly near the 3'-end of the 23S rRNA, where it nucleates assembly of the 50S subunit. This chain is Large ribosomal subunit protein uL3, found in Lactococcus lactis subsp. lactis (strain IL1403) (Streptococcus lactis).